The chain runs to 173 residues: Photosystem I assembly protein Ycf3 (173 aa).

3 TPR repeats span residues Ala35–Pro68, Ser72–Gln105, and Gly120–Gly153.

Belongs to the Ycf3 family.

It localises to the cellular thylakoid membrane. Its function is as follows. Essential for the assembly of the photosystem I (PSI) complex. May act as a chaperone-like factor to guide the assembly of the PSI subunits. The sequence is that of Photosystem I assembly protein Ycf3 from Prochlorococcus marinus (strain MIT 9313).